The primary structure comprises 65 residues: Large ribosomal subunit protein bL35 (65 aa).

Belongs to the bacterial ribosomal protein bL35 family.

This chain is Large ribosomal subunit protein bL35, found in Nitrosomonas europaea (strain ATCC 19718 / CIP 103999 / KCTC 2705 / NBRC 14298).